Reading from the N-terminus, the 396-residue chain is Probable sugar efflux transporter (396 aa).

The next 12 membrane-spanning stretches (helical) occupy residues Val15–Leu35, Val50–Leu70, Leu81–Phe101, Val103–Ala123, Ala136–Ile156, Thr169–Pro189, Pro209–Tyr229, Phe246–Gly266, Ser275–Ala295, Leu301–Val321, Val333–Gly353, and Ala364–Phe384.

This sequence belongs to the major facilitator superfamily. SotB (TC 2.A.1.2) family.

Its subcellular location is the cell inner membrane. Involved in the efflux of sugars. The physiological role may be the reduction of the intracellular concentration of toxic sugars or sugar metabolites. This chain is Probable sugar efflux transporter, found in Salmonella paratyphi C (strain RKS4594).